A 235-amino-acid chain; its full sequence is Ribonuclease S-2 (235 aa).

The first 31 residues, 1-31, serve as a signal peptide directing secretion; the sequence is MATVQKSQHSHFFLLVGCIVHLSNFCSTTTA. Position 41 (glutamine 41) interacts with RNA. Cysteine 47 and cysteine 54 are disulfide-bonded. Residue histidine 66 coordinates RNA. Catalysis depends on histidine 66, which acts as the Proton donor. N-linked (GlcNAc...) asparagine glycosylation occurs at asparagine 72. 3 disulfide bridges follow: cysteine 80–cysteine 129, cysteine 189–cysteine 217, and cysteine 200–cysteine 211. RNA contacts are provided by residues 105-106, arginine 108, and phenylalanine 118; that span reads DL. Glutamine 122 is an active-site residue. 125-126 is a binding site for RNA; sequence KH. Histidine 126 serves as the catalytic Proton acceptor.

Belongs to the RNase T2 family.

The protein localises to the secreted. The protein resides in the extracellular space. It carries out the reaction a ribonucleotidyl-ribonucleotide-RNA + H2O = a 3'-end 3'-phospho-ribonucleotide-RNA + a 5'-end dephospho-ribonucleoside-RNA + H(+). Self-incompatibility (SI) is the inherited ability of a flowering plant to prevent self-fertilization by discriminating between self and non-self pollen during pollination. In many species, self-incompatibility is controlled by the single, multiallelic locus S. The polypeptide is Ribonuclease S-2 (S2) (Antirrhinum hispanicum (Snapdragon)).